We begin with the raw amino-acid sequence, 198 residues long: dTTP/UTP pyrophosphatase (198 aa).

D78 (proton acceptor) is an active-site residue.

It belongs to the Maf family. YhdE subfamily. The cofactor is a divalent metal cation.

Its subcellular location is the cytoplasm. It catalyses the reaction dTTP + H2O = dTMP + diphosphate + H(+). It carries out the reaction UTP + H2O = UMP + diphosphate + H(+). Its function is as follows. Nucleoside triphosphate pyrophosphatase that hydrolyzes dTTP and UTP. May have a dual role in cell division arrest and in preventing the incorporation of modified nucleotides into cellular nucleic acids. The protein is dTTP/UTP pyrophosphatase of Chromobacterium violaceum (strain ATCC 12472 / DSM 30191 / JCM 1249 / CCUG 213 / NBRC 12614 / NCIMB 9131 / NCTC 9757 / MK).